Reading from the N-terminus, the 491-residue chain is Pyruvate carboxylase subunit A (491 aa).

The Biotin carboxylation domain occupies 1-445 (MFSKILVANR…HTHFVDEYRR (445 aa)). ATP is bound by residues K116, E200, and H235. The ATP-grasp domain maps to 120–316 (KKLMKKAGVP…LVKEQIRVAS (197 aa)). Residue R291 is part of the active site.

Heterooctamer of four A and four B subunits. It depends on Mg(2+) as a cofactor. Requires Mn(2+) as cofactor. Co(2+) serves as cofactor.

It carries out the reaction hydrogencarbonate + pyruvate + ATP = oxaloacetate + ADP + phosphate + H(+). The protein operates within carbohydrate biosynthesis; gluconeogenesis. With respect to regulation, inhibited by ADP and alpha-ketoglutarate. In terms of biological role, pyruvate carboxylase catalyzes a 2-step reaction, involving the ATP-dependent carboxylation of the covalently attached biotin in the first step and the transfer of the carboxyl group to pyruvate in the second. This chain is Pyruvate carboxylase subunit A (pycA), found in Methanothermobacter thermautotrophicus (strain ATCC 29096 / DSM 1053 / JCM 10044 / NBRC 100330 / Delta H) (Methanobacterium thermoautotrophicum).